Reading from the N-terminus, the 1119-residue chain is DISARM protein DrmA (1119 aa).

The disordered stretch occupies residues 73 to 95; the sequence is PESGMEEDVEQQRNSELEQEAEE. The Helicase C-terminal domain occupies 813 to 986; that stretch reads ELSKYIDPYR…ATPYASRARD (174 aa).

It belongs to the helicase family.

The protein localises to the cytoplasm. Its function is as follows. Component of antiviral defense system DISARM (defense island system associated with restriction-modification), composed of DrmE, DrmA, DrmB, DrmC and DrmMII. DISARM is probably a multi-gene restriction module, this subunit is probably a helicase. Expression of DISARM in B.subtilis (strain BEST7003) confers resistance to phages Nf, phi29, phi105, phi3T, SPO1, SPR and SPP1. Protection is over 10(7)-fold against phi3T, 10(4)-10(5)-fold against Nf, phi29, phi105 and SPR, 100-fold against SPO1 and 10-fold against SPP1. DISARM does not interfere with phage adsorption, but instead interferes with (phi3T) DNA replication early in its cycle, preventing replication, circularization and lysogeny and probably causes phage DNA degradation (DNA is degraded in SPP1-infected cells). The protein is DISARM protein DrmA of Bacillus paralicheniformis (strain ATCC 9945a / NCIMB 11709 / CD-2).